The primary structure comprises 89 residues: Small ribosomal subunit protein uS15 (89 aa).

The protein belongs to the universal ribosomal protein uS15 family. In terms of assembly, part of the 30S ribosomal subunit. Forms a bridge to the 50S subunit in the 70S ribosome, contacting the 23S rRNA.

One of the primary rRNA binding proteins, it binds directly to 16S rRNA where it helps nucleate assembly of the platform of the 30S subunit by binding and bridging several RNA helices of the 16S rRNA. In terms of biological role, forms an intersubunit bridge (bridge B4) with the 23S rRNA of the 50S subunit in the ribosome. This chain is Small ribosomal subunit protein uS15, found in Paracoccus denitrificans (strain Pd 1222).